Here is a 430-residue protein sequence, read N- to C-terminus: KIN17-like protein (430 aa).

The C2H2-type zinc finger occupies 28-50; the sequence is CQMCQKQCRDENGFKCHCMSESH. The winged helix-turn-helix (wHTH) stretch occupies residues 51 to 160; sequence QRQMQVFGQA…KARLKRKRIK (110 aa). Residues 147 to 183 are a coiled coil; that stretch reads EQAVKARLKRKRIKSDLAEDERQERMIARQIERAQQS. Residues 155–158 carry the Nuclear localization signal (NLS) motif; that stretch reads KRKR. Disordered stretches follow at residues 179–230 and 261–284; these read RAQQ…ANKA and EEED…GKDA. A compositionally biased stretch (acidic residues) spans 209-224; sequence EYSDSENDHEGQEEDA. Over residues 261–278 the composition is skewed to basic and acidic residues; that stretch reads EEEDEVSARDKEKEELAK. Positions 283–312 form a coiled coil; the sequence is DAINAAEARRSALDELMKEEEKAKERSNRK. The tract at residues 319 to 370 is C-terminal subdomain A; it reads GIVVKVMSKSLAEKGYCKQKGVVKRVIDKYVGEIEMLESKHVLRVDQDELET. Positions 376-427 are C-terminal subdomain B; it reads GGLVRIVNGAYRGSNARLLSVDTERFCAKVQVEKGLYDGKVLKAIEYEDICK.

This sequence belongs to the KIN17 family.

The protein localises to the nucleus. This chain is KIN17-like protein, found in Oryza sativa subsp. indica (Rice).